Here is a 419-residue protein sequence, read N- to C-terminus: G protein-activated inward rectifier potassium channel 4 (419 aa).

Topologically, residues Met-1–Trp-86 are cytoplasmic. The residue at position 5 (Ser-5) is a Phosphoserine. Residues Arg-87 to Ile-111 form a helical membrane-spanning segment. The Extracellular segment spans residues Ala-112–Gly-135. Residues Phe-136–Glu-147 constitute an intramembrane region (helical; Pore-forming). Residues Thr-148 to Phe-154 constitute an intramembrane region (pore-forming). The Selectivity filter motif lies at Thr-149–Phe-154. Topologically, residues Arg-155–Glu-163 are extracellular. A helical membrane pass occupies residues Gly-164–Cys-185. Topologically, residues Met-186 to Met-419 are cytoplasmic. Residues Gly-388–Met-419 form a disordered region. The span at Asn-394–Glu-405 shows a compositional bias: acidic residues. Polar residues predominate over residues Leu-409–Met-419.

The protein belongs to the inward rectifier-type potassium channel (TC 1.A.2.1) family. KCNJ5 subfamily. As to quaternary structure, associates with KCNJ3/GIRK1 to form a G-protein-activated heteromultimer pore-forming unit. Associates with KCNJ6/GRIK2 to form a G-protein-activated heteromultimer pore-forming unit. As to expression, expressed in the heart.

It is found in the membrane. The enzyme catalyses K(+)(in) = K(+)(out). Its activity is regulated as follows. Heteromultimer composed of KCNJ3/GIRK1 and KCNJ5/GIRK4 is activated by phosphatidylinositol 4,5 biphosphate (PtdIns(4,5)P2). Inward rectifier potassium channels are characterized by a greater tendency to allow potassium to flow into the cell rather than out of it. Their voltage dependence is regulated by the concentration of extracellular potassium; as external potassium is raised, the voltage range of the channel opening shifts to more positive voltages. The inward rectification is mainly due to the blockage of outward current by internal magnesium. Can be blocked by external barium. This potassium channel is controlled by G proteins. Forms a functional channel in association with KCNJ3/GIRK1. This chain is G protein-activated inward rectifier potassium channel 4 (Kcnj5), found in Mus musculus (Mouse).